We begin with the raw amino-acid sequence, 193 residues long: Phosphoheptose isomerase (193 aa).

Residues 37–193 (LADSFKAGGK…QLIEKEMVKA (157 aa)) enclose the SIS domain. 52 to 54 (NGG) provides a ligand contact to substrate. The Zn(2+) site is built by His61 and Glu65. Substrate-binding positions include Glu65, 93 to 94 (ND), 119 to 121 (STS), Ser124, and Gln172. Residues Gln172 and His180 each contribute to the Zn(2+) site.

The protein belongs to the SIS family. GmhA subfamily. Homotetramer. Zn(2+) is required as a cofactor.

The protein localises to the cytoplasm. It catalyses the reaction 2 D-sedoheptulose 7-phosphate = D-glycero-alpha-D-manno-heptose 7-phosphate + D-glycero-beta-D-manno-heptose 7-phosphate. It participates in carbohydrate biosynthesis; D-glycero-D-manno-heptose 7-phosphate biosynthesis; D-glycero-alpha-D-manno-heptose 7-phosphate and D-glycero-beta-D-manno-heptose 7-phosphate from sedoheptulose 7-phosphate: step 1/1. Catalyzes the isomerization of sedoheptulose 7-phosphate in D-glycero-D-manno-heptose 7-phosphate. The polypeptide is Phosphoheptose isomerase (Yersinia enterocolitica serotype O:8 / biotype 1B (strain NCTC 13174 / 8081)).